The sequence spans 967 residues: Sarcosine oxidase subunit alpha (967 aa).

NAD(+) contacts are provided by A141, D160, E161, R162, S168, V207, A420, and T427. The (6R)-5,10-methylene-5,6,7,8-tetrahydrofolate site is built by T694 and E786.

It belongs to the GcvT family. As to quaternary structure, heterotetramer composed of subunits alpha (SoxA), beta (SoxB), gamma (SoxG) and delta (SoxD). NAD(+) is required as a cofactor.

The protein resides in the cytoplasm. The enzyme catalyses sarcosine + (6S)-5,6,7,8-tetrahydrofolate + O2 = (6R)-5,10-methylene-5,6,7,8-tetrahydrofolate + glycine + H2O2. The catalysed reaction is sarcosine + O2 + H2O = formaldehyde + glycine + H2O2. Functionally, in the presence of tetrahydrofolate, catalyzes the oxidative demethylation of sarcosine to yield glycine, 5,10-methylenetetrahydrofolate and hydrogen peroxide. In the absence of tetrahydrofolate, catalyzes the oxidative demethylation of sarcosine to yield glycine, formaldehyde and hydrogen peroxide. This Corynebacterium sp. (strain P-1) protein is Sarcosine oxidase subunit alpha.